Here is a 187-residue protein sequence, read N- to C-terminus: Hypoxanthine/guanine phosphoribosyltransferase (187 aa).

Belongs to the purine/pyrimidine phosphoribosyltransferase family. Archaeal HPRT subfamily. Homodimer.

Its subcellular location is the cytoplasm. The enzyme catalyses IMP + diphosphate = hypoxanthine + 5-phospho-alpha-D-ribose 1-diphosphate. It carries out the reaction GMP + diphosphate = guanine + 5-phospho-alpha-D-ribose 1-diphosphate. Its pathway is purine metabolism; IMP biosynthesis via salvage pathway; IMP from hypoxanthine: step 1/1. Functionally, catalyzes a salvage reaction resulting in the formation of IMP that is energically less costly than de novo synthesis. In Methanocorpusculum labreanum (strain ATCC 43576 / DSM 4855 / Z), this protein is Hypoxanthine/guanine phosphoribosyltransferase.